A 465-amino-acid chain; its full sequence is Monocarboxylate transporter 4 (465 aa).

The Cytoplasmic portion of the chain corresponds to 2 to 17; it reads GGAVVDEGPTGVKAPD. A helical transmembrane segment spans residues 18–38; that stretch reads GGWGWAVLFGCFVITGFSYAF. Over 39-61 the chain is Extracellular; that stretch reads PKAVSVFFKELIQEFGIGYSDTA. A helical transmembrane segment spans residues 62–82; the sequence is WISSILLAMLYGTGPLCSVCV. Residues 83 to 84 are Cytoplasmic-facing; the sequence is NR. The chain crosses the membrane as a helical span at residues 85-105; it reads FGCRPVMLVGGLFASLGMVAA. Residues 106-109 lie on the Extracellular side of the membrane; it reads SFCR. A helical membrane pass occupies residues 110–130; sequence SIIQVYLTTGVITGLGLALNF. Over 131-149 the chain is Cytoplasmic; it reads QPSLIMLNRYFSKRRPMAN. A helical transmembrane segment spans residues 150–170; sequence GLAAAGSPVFLCALSPLGQLL. The Extracellular portion of the chain corresponds to 171 to 179; that stretch reads QDRYGWRGG. Residues 180–200 traverse the membrane as a helical segment; it reads FLILGGLLLNCCVCAALMRPL. Residues 201–227 lie on the Cytoplasmic side of the membrane; it reads VVTAQPGSGPPRPSRRLLDLSVFRDRG. Residues 228–248 traverse the membrane as a helical segment; the sequence is FVLYAVAASVMVLGLFVPPVF. Residues 249 to 264 are Extracellular-facing; that stretch reads VVSYAKDLGVPDTKAA. The chain crosses the membrane as a helical span at residues 265–285; sequence FLLTILGFIDIFARPAAGFVA. Topologically, residues 286 to 294 are cytoplasmic; that stretch reads GLGKVRPYS. The helical transmembrane segment at 295–315 threads the bilayer; sequence VYLFSFSMFFNGLADLAGSTA. The Extracellular segment spans residues 316–317; it reads GD. The helical transmembrane segment at 318–338 threads the bilayer; the sequence is YGGLVVFCIFFGISYGMVGAL. Over 339–351 the chain is Cytoplasmic; that stretch reads QFEVLMAIVGTHK. The helical transmembrane segment at 352 to 372 threads the bilayer; the sequence is FSSAIGLVLLMEAVAVLVGPP. The Extracellular segment spans residues 373 to 384; sequence SGGKLLDATHVY. A helical membrane pass occupies residues 385–405; it reads MYVFILAGAEVLTSSLILLLG. Topologically, residues 406–465 are cytoplasmic; sequence NFFCIRKKPKEPQPEVAAAEEEKLHKPPADSGVDLREVEHFLKAEPEKNGEVVHTPETSV. A disordered region spans residues 419–438; it reads PEVAAAEEEKLHKPPADSGV. Basolateral sorting signal stretches follow at residues 423–441 and 441–465; these read AAEEEKLHKPPADSGVDLR and REVEHFLKAEPEKNGEVVHTPETSV. Over residues 425 to 438 the composition is skewed to basic and acidic residues; it reads EEEKLHKPPADSGV. Phosphoserine is present on Ser-436. Thr-460 carries the post-translational modification Phosphothreonine. Phosphoserine is present on Ser-464.

This sequence belongs to the major facilitator superfamily. Monocarboxylate porter (TC 2.A.1.13) family. Interacts with BSG; interaction mediates SLC16A3 targeting to the plasma membrane. In terms of tissue distribution, highly expressed in skeletal muscle.

Its subcellular location is the cell membrane. It localises to the basolateral cell membrane. The enzyme catalyses (S)-lactate(in) + H(+)(in) = (S)-lactate(out) + H(+)(out). It carries out the reaction pyruvate(out) + H(+)(out) = pyruvate(in) + H(+)(in). In terms of biological role, proton-dependent transporter of monocarboxylates such as L-lactate and pyruvate. Plays a predominant role in L-lactate efflux from highly glycolytic cells. The polypeptide is Monocarboxylate transporter 4 (SLC16A3) (Homo sapiens (Human)).